Here is a 264-residue protein sequence, read N- to C-terminus: Phosphatidylserine decarboxylase proenzyme (264 aa).

Residues Asp-86, His-142, and Ser-226 each act as charge relay system; for autoendoproteolytic cleavage activity in the active site. The Schiff-base intermediate with substrate; via pyruvic acid; for decarboxylase activity role is filled by Ser-226. Position 226 is a pyruvic acid (Ser); by autocatalysis (Ser-226).

Belongs to the phosphatidylserine decarboxylase family. PSD-B subfamily. Prokaryotic type I sub-subfamily. As to quaternary structure, heterodimer of a large membrane-associated beta subunit and a small pyruvoyl-containing alpha subunit. The cofactor is pyruvate. Is synthesized initially as an inactive proenzyme. Formation of the active enzyme involves a self-maturation process in which the active site pyruvoyl group is generated from an internal serine residue via an autocatalytic post-translational modification. Two non-identical subunits are generated from the proenzyme in this reaction, and the pyruvate is formed at the N-terminus of the alpha chain, which is derived from the carboxyl end of the proenzyme. The autoendoproteolytic cleavage occurs by a canonical serine protease mechanism, in which the side chain hydroxyl group of the serine supplies its oxygen atom to form the C-terminus of the beta chain, while the remainder of the serine residue undergoes an oxidative deamination to produce ammonia and the pyruvoyl prosthetic group on the alpha chain. During this reaction, the Ser that is part of the protease active site of the proenzyme becomes the pyruvoyl prosthetic group, which constitutes an essential element of the active site of the mature decarboxylase.

Its subcellular location is the cell membrane. It catalyses the reaction a 1,2-diacyl-sn-glycero-3-phospho-L-serine + H(+) = a 1,2-diacyl-sn-glycero-3-phosphoethanolamine + CO2. It participates in phospholipid metabolism; phosphatidylethanolamine biosynthesis; phosphatidylethanolamine from CDP-diacylglycerol: step 2/2. Functionally, catalyzes the formation of phosphatidylethanolamine (PtdEtn) from phosphatidylserine (PtdSer). This is Phosphatidylserine decarboxylase proenzyme from Geobacillus kaustophilus (strain HTA426).